Reading from the N-terminus, the 511-residue chain is Keratin, type II cytoskeletal 72 (511 aa).

The segment at 1-124 (MSRQLTHFPR…DPEIQRVRAQ (124 aa)) is head. The coil 1A stretch occupies residues 125 to 160 (EREQIKALNNKFASFIDKVRFLEQQNQVLETKWNLL). The IF rod domain occupies 125–438 (EREQIKALNN…KLLESEECRM (314 aa)). Residues 161–179 (QQLDLNNCRKNLEPIYEGY) form a linker 1 region. The segment at 180–271 (ISNLQKQLEM…CLYEGEITQI (92 aa)) is coil 1B. A linker 12 region spans residues 272–295 (QSHISDTSIVLSMDNNRDLDLDSI). Residues 296 to 434 (IAEVRAQYEE…ATYRKLLESE (139 aa)) are coil 2. A tail region spans residues 435-511 (ECRMSGEYPN…SSCATKKASR (77 aa)). Positions 486–511 (GSCGSELKDPLAKTSGSSCATKKASR) are disordered.

The protein belongs to the intermediate filament family. Heterotetramer of two type I and two type II keratins. In terms of tissue distribution, highly expressed in hair follicles from scalp and eyebrow. Also expressed in palmoplantar epidermis. Not expressed in face skin despite the presence of fine hairs histologically. In hair, it is specifically present in the inner root sheath (IRS) of the hair follicle. Present in the IRS cuticle, but not in Henle or Huxley layers of the IRS. In the IRS cuticle, its presence is delayed up to the height of the apex of the dermal papilla (at protein level).

In terms of biological role, has a role in hair formation. Specific component of keratin intermediate filaments in the inner root sheath (IRS) of the hair follicle. The protein is Keratin, type II cytoskeletal 72 (KRT72) of Homo sapiens (Human).